Consider the following 120-residue polypeptide: Glycine cleavage system H protein (120 aa).

Residues 17 to 99 (VATVGITEHA…QGAAWFFKLK (83 aa)) form the Lipoyl-binding domain. N6-lipoyllysine is present on K58.

The protein belongs to the GcvH family. As to quaternary structure, the glycine cleavage system is composed of four proteins: P, T, L and H. (R)-lipoate serves as cofactor.

Its function is as follows. The glycine cleavage system catalyzes the degradation of glycine. The H protein shuttles the methylamine group of glycine from the P protein to the T protein. The sequence is that of Glycine cleavage system H protein from Sinorhizobium fredii (strain NBRC 101917 / NGR234).